Here is a 499-residue protein sequence, read N- to C-terminus: Probable cytosol aminopeptidase (499 aa).

The Mn(2+) site is built by Lys-271 and Asp-276. The active site involves Lys-283. Mn(2+)-binding residues include Asp-294, Asp-353, and Glu-355. Arg-357 is a catalytic residue.

The protein belongs to the peptidase M17 family. Requires Mn(2+) as cofactor.

The protein localises to the cytoplasm. It catalyses the reaction Release of an N-terminal amino acid, Xaa-|-Yaa-, in which Xaa is preferably Leu, but may be other amino acids including Pro although not Arg or Lys, and Yaa may be Pro. Amino acid amides and methyl esters are also readily hydrolyzed, but rates on arylamides are exceedingly low.. The enzyme catalyses Release of an N-terminal amino acid, preferentially leucine, but not glutamic or aspartic acids.. Presumably involved in the processing and regular turnover of intracellular proteins. Catalyzes the removal of unsubstituted N-terminal amino acids from various peptides. This chain is Probable cytosol aminopeptidase, found in Bordetella parapertussis (strain 12822 / ATCC BAA-587 / NCTC 13253).